Reading from the N-terminus, the 37-residue chain is Large ribosomal subunit protein bL36 (37 aa).

The protein belongs to the bacterial ribosomal protein bL36 family.

The sequence is that of Large ribosomal subunit protein bL36 from Nitrosococcus oceani (strain ATCC 19707 / BCRC 17464 / JCM 30415 / NCIMB 11848 / C-107).